We begin with the raw amino-acid sequence, 207 residues long: Phosphoribosylglycinamide formyltransferase (207 aa).

13 to 15 (GSN) contributes to the N(1)-(5-phospho-beta-D-ribosyl)glycinamide binding site. Residues 100-103 (MHIL) and Asn-120 each bind (6R)-10-formyltetrahydrofolate. His-122 acts as the Proton donor in catalysis. Asp-162 serves as a coordination point for (6R)-10-formyltetrahydrofolate. A N(1)-(5-phospho-beta-D-ribosyl)glycinamide-binding site is contributed by Glu-191.

The protein belongs to the GART family.

The catalysed reaction is N(1)-(5-phospho-beta-D-ribosyl)glycinamide + (6R)-10-formyltetrahydrofolate = N(2)-formyl-N(1)-(5-phospho-beta-D-ribosyl)glycinamide + (6S)-5,6,7,8-tetrahydrofolate + H(+). It functions in the pathway purine metabolism; IMP biosynthesis via de novo pathway; N(2)-formyl-N(1)-(5-phospho-D-ribosyl)glycinamide from N(1)-(5-phospho-D-ribosyl)glycinamide (10-formyl THF route): step 1/1. This Schizosaccharomyces pombe (strain 972 / ATCC 24843) (Fission yeast) protein is Phosphoribosylglycinamide formyltransferase (ade5).